The sequence spans 364 residues: Ribosomal RNA small subunit methyltransferase H (364 aa).

S-adenosyl-L-methionine-binding positions include 55-57, aspartate 75, phenylalanine 101, aspartate 122, and glutamine 129; that span reads GGH. Residues 333-364 form a disordered region; the sequence is LPPGGGAGFVKAGRVPGEPVRGTRAGSKGRRR.

Belongs to the methyltransferase superfamily. RsmH family.

Its subcellular location is the cytoplasm. The catalysed reaction is cytidine(1402) in 16S rRNA + S-adenosyl-L-methionine = N(4)-methylcytidine(1402) in 16S rRNA + S-adenosyl-L-homocysteine + H(+). Its function is as follows. Specifically methylates the N4 position of cytidine in position 1402 (C1402) of 16S rRNA. This Bordetella bronchiseptica (strain ATCC BAA-588 / NCTC 13252 / RB50) (Alcaligenes bronchisepticus) protein is Ribosomal RNA small subunit methyltransferase H.